A 308-amino-acid chain; its full sequence is MRPEGSLTYWVPERLRQGFCGVGRAAQALVCASAKEGTAFRMEAVQEGAAGVESEQAALGEEAVLLLDDIMAEVEVVAEEEGLVERREEAQRAQQAVPGPGPMTPESALEELLAVQVELEPVNAQARKAFSRQREKMERRRKPHLDRRGAVIQSVPGFWANVIANHPQMSALITDEDEDMLSYMVSLEVEEEKHPVHLCKIMLFFRSNPYFQNKVITKEYLVNITEYRASHSTPIEWYLDYEVEAYRRRHHNSSLNFFNWFSDHNFAGSNKIAEILCKDLWRNPLQYYKRMKPPEEGTETSGDSQLLS.

The protein belongs to the nucleosome assembly protein (NAP) family.

It localises to the cytoplasm. Its subcellular location is the nucleus. May be involved in sperm differentiation and proliferation. This chain is Testis-specific Y-encoded protein 8 (TSPY8), found in Homo sapiens (Human).